The following is a 449-amino-acid chain: Allantoinase (449 aa).

Zn(2+)-binding residues include H61, H63, K148, H184, H240, and D313. K148 carries the N6-carboxylysine modification.

This sequence belongs to the metallo-dependent hydrolases superfamily. Allantoinase family. In terms of assembly, homotetramer. Requires Zn(2+) as cofactor. In terms of processing, carboxylation allows a single lysine to coordinate two zinc ions.

The catalysed reaction is (S)-allantoin + H2O = allantoate + H(+). It functions in the pathway nitrogen metabolism; (S)-allantoin degradation; allantoate from (S)-allantoin: step 1/1. In terms of biological role, catalyzes the conversion of allantoin (5-ureidohydantoin) to allantoic acid by hydrolytic cleavage of the five-member hydantoin ring. The chain is Allantoinase from Desulfitobacterium hafniense (strain Y51).